A 172-amino-acid chain; its full sequence is Cytidylate kinase (172 aa).

Residue 7–15 participates in ATP binding; it reads GLAGTGTTT.

It belongs to the cytidylate kinase family. Type 2 subfamily.

It localises to the cytoplasm. It catalyses the reaction CMP + ATP = CDP + ADP. It carries out the reaction dCMP + ATP = dCDP + ADP. This chain is Cytidylate kinase, found in Methanobrevibacter smithii (strain ATCC 35061 / DSM 861 / OCM 144 / PS).